Consider the following 534-residue polypeptide: Probable inorganic phosphate transporter 1-8 (534 aa).

The Cytoplasmic portion of the chain corresponds to 1–21 (MPIKVLSSLDVARTQWYHFKA). The helical transmembrane segment at 22–42 (IIVAGMGLFTDAYDLFCIAPV) threads the bilayer. The Extracellular segment spans residues 43 to 61 (MKMISHVYYNGDSINTAVL). A helical membrane pass occupies residues 62–82 (STSYAIALLGTATGQLVFGYL). Topologically, residues 83–90 (GDRVGRRR) are cytoplasmic. A helical transmembrane segment spans residues 91–111 (VYGLCLIIMILSSFGCGFSVC). Residues 112–123 (TTRRSCVMVSLG) lie on the Extracellular side of the membrane. The chain crosses the membrane as a helical span at residues 124-144 (FFRFFLGLGIGGDYPLSATIM). Over 145–153 (SEFANKRTR) the chain is Cytoplasmic. A helical membrane pass occupies residues 154–174 (GAFIAAVFSMQGLGILVSSAV). Over 175–199 (TMAVCVAFKRSGGGLEVDAAAPTEA) the chain is Extracellular. Residues 200-220 (DLAWRLILMIGALPAALTFYW) form a helical membrane-spanning segment. The Cytoplasmic segment spans residues 221–281 (RMLMPETARY…KLFSRCFFRL (61 aa)). Residues 282-302 (HGRDLFAASFNWFLVDIVFYT) traverse the membrane as a helical segment. Residues 303–333 (SNLLLSHIFSHYSKKPSTAENVYDAAFEVAE) are Extracellular-facing. The helical transmembrane segment at 334–354 (LGAIIAACSTIPGYWFTVYFI) threads the bilayer. The Cytoplasmic segment spans residues 355-361 (DKIGRVK). The chain crosses the membrane as a helical span at residues 362 to 382 (IQIMGFFFMAVIYLVAGIPYS). Over 383-396 (WYWSKHEHNNKGFM) the chain is Extracellular. The chain crosses the membrane as a helical span at residues 397–417 (VLYGLVFFFCNFGPNTTTFII). Residues 418 to 431 (PAEHFPARFRSTCH) are Cytoplasmic-facing. The chain crosses the membrane as a helical span at residues 432-452 (GISGAAGKLGAIVGTVGFLWA). At 453–472 (TKKMESDDKNQIYPEVNRMR) the chain is on the extracellular side. Residues 473–493 (IAFLILGGVCIAGILVTYFFT) form a helical membrane-spanning segment. Topologically, residues 494–534 (KETMGRSLEENEHDQDNNAESEDEPQIVDGQSSVSTLLQTR) are cytoplasmic. A disordered region spans residues 501–534 (LEENEHDQDNNAESEDEPQIVDGQSSVSTLLQTR). A compositionally biased stretch (acidic residues) spans 510 to 519 (NNAESEDEPQ). Residue Ser514 is modified to Phosphoserine. The segment covering 522–534 (DGQSSVSTLLQTR) has biased composition (polar residues).

The protein belongs to the major facilitator superfamily. Phosphate:H(+) symporter (TC 2.A.1.9) family. In roots.

Its subcellular location is the membrane. Functionally, high-affinity transporter for external inorganic phosphate. This is Probable inorganic phosphate transporter 1-8 (PHT1-8) from Arabidopsis thaliana (Mouse-ear cress).